The primary structure comprises 669 residues: Very long-chain fatty acid transport protein (669 aa).

The Cytoplasmic segment spans residues 1 to 5; it reads MSPIQ. Residues 6-26 form a helical membrane-spanning segment; that stretch reads VVVFALSRIFLLLFRLIKLII. Residues 27 to 148 are Extracellular-facing; sequence TPIQKSLGYL…YVAIDCTNKP (122 aa). The helical transmembrane segment at 149-169 threads the bilayer; that stretch reads LFVFLWLSLWNIGAIPAFLNY. Residues 170–270 are Cytoplasmic-facing; sequence NTKGTPLVHS…TGLPKSAIMS (101 aa). 256-267 contacts ATP; it reads YTSGTTGLPKSA. Residues 271–339 lie within the membrane without spanning it; that stretch reads WRKSSVGCQV…FWKQVYLTGA (69 aa). The Cytoplasmic portion of the chain corresponds to 340 to 669; sequence THIQYVGEVC…EAIDAQTIKL (330 aa). The FACS motif lies at 501–551; it reads DAWYRCGDLLKADEYGLWYFLDRMGDTFRWKSENVSTTEVEDQLTASNKEQ. The C-terminal peroxisome targeting signal (PTS1) signature appears at 667-669; that stretch reads IKL.

This sequence belongs to the ATP-dependent AMP-binding enzyme family. As to quaternary structure, interacts with fatty acyl-CoA synthetases FAA1 and FAA4.

The protein localises to the lipid droplet. Its subcellular location is the cell membrane. It localises to the peroxisome membrane. It is found in the peroxisome. The enzyme catalyses a very long-chain fatty acid + ATP + CoA = a very long-chain fatty acyl-CoA + AMP + diphosphate. It carries out the reaction tetracosanoate + ATP + CoA = tetracosanoyl-CoA + AMP + diphosphate. Acyl-CoA synthetase required for both the import of long chain fatty acids (LCFAs) (C14-C18) and the activation very long chain fatty acids (VLCFAs) (C20-C26) by esterification of the fatty acids into metabolically active CoA-thioesters for subsequent degradation or incorporation into phospholipids. The transport and fatty acyl-CoA synthetase activities are genetically separable and are thus independent activities. Esterifies VLCFAs in the peroxisome matrix. The VLCFAs are actively transported into peroxisomes by a PXA1-PXA2 heterodimeric transporter in the peroxisomal membrane. The polypeptide is Very long-chain fatty acid transport protein (FAT1) (Saccharomyces cerevisiae (strain ATCC 204508 / S288c) (Baker's yeast)).